Here is a 138-residue protein sequence, read N- to C-terminus: Small ribosomal subunit protein uS11c (138 aa).

Residues 1 to 22 form a disordered region; that stretch reads MAKAIPKISSRRNGRIGSRKGA. The segment covering 9 to 22 has biased composition (basic residues); it reads SSRRNGRIGSRKGA.

The protein belongs to the universal ribosomal protein uS11 family. Part of the 30S ribosomal subunit.

The protein localises to the plastid. It localises to the chloroplast. The sequence is that of Small ribosomal subunit protein uS11c from Nicotiana tomentosiformis (Tobacco).